The sequence spans 379 residues: Alcohol dehydrogenase class-3 (379 aa).

N-acetylalanine is present on A2. Residue C47 participates in Zn(2+) binding. H48 serves as a coordination point for NAD(+). Residues T49 and H69 each coordinate an alcohol. Zn(2+) is bound by residues H69, E70, C99, C102, C105, C113, and C177. Residues 202-207 (GLGTVG), D226, K231, I272, 295-297 (VGV), 320-322 (TAF), and R372 contribute to the NAD(+) site.

Belongs to the zinc-containing alcohol dehydrogenase family. Class-III subfamily. In terms of assembly, homodimer. It depends on Zn(2+) as a cofactor. As to expression, ubiquitous.

The protein resides in the cytoplasm. It carries out the reaction a primary alcohol + NAD(+) = an aldehyde + NADH + H(+). The catalysed reaction is a secondary alcohol + NAD(+) = a ketone + NADH + H(+). The enzyme catalyses S-(hydroxymethyl)glutathione + NADP(+) = S-formylglutathione + NADPH + H(+). It catalyses the reaction S-(hydroxymethyl)glutathione + NAD(+) = S-formylglutathione + NADH + H(+). It carries out the reaction S-nitrosoglutathione + NADH + H(+) = S-(hydroxysulfenamide)glutathione + NAD(+). With respect to regulation, repressed by thiol-modifying agents N-ethylmaleimide (NEM) and 5,5-dithio-bis-(2-nitrobenzoic acid) (DTNB), as well as by methyl methanethiosulfonate (MMTS) in a dose-dependent manner. Inhibited by hydrogen peroxide H(2)O(2). Alcohol dehydrogenase catalyzing the reduction of nitrosoglutathione. Can also use long-chain alcohols including cinnamyl alcohol and geraniol, and, to a lower extent, octanol. Plays a central role in formaldehyde detoxification. Not able to use ethanol (EtOH) as substrate. The polypeptide is Alcohol dehydrogenase class-3 (Arabidopsis thaliana (Mouse-ear cress)).